A 211-amino-acid chain; its full sequence is Large ribosomal subunit protein bL25 (211 aa).

Residues 186–211 form a disordered region; sequence GRALQSMDAAESAVEQPGEQPATAAG.

Belongs to the bacterial ribosomal protein bL25 family. CTC subfamily. As to quaternary structure, part of the 50S ribosomal subunit; part of the 5S rRNA/L5/L18/L25 subcomplex. Contacts the 5S rRNA. Binds to the 5S rRNA independently of L5 and L18.

Its function is as follows. This is one of the proteins that binds to the 5S RNA in the ribosome where it forms part of the central protuberance. The polypeptide is Large ribosomal subunit protein bL25 (Gloeobacter violaceus (strain ATCC 29082 / PCC 7421)).